The following is a 343-amino-acid chain: Aspartate-semialdehyde dehydrogenase (343 aa).

NADP(+)-binding positions include 13–16 (TGAV) and 41–42 (KS). Arginine 103 is a phosphate binding site. The active-site Acyl-thioester intermediate is the cysteine 134. Glutamine 161 contacts substrate. Residue 164-165 (SG) coordinates NADP(+). A phosphate-binding site is contributed by lysine 220. Arginine 241 contributes to the substrate binding site. The active-site Proton acceptor is histidine 248. Glutamine 321 serves as a coordination point for NADP(+).

It belongs to the aspartate-semialdehyde dehydrogenase family. In terms of assembly, homodimer.

The catalysed reaction is L-aspartate 4-semialdehyde + phosphate + NADP(+) = 4-phospho-L-aspartate + NADPH + H(+). Its pathway is amino-acid biosynthesis; L-lysine biosynthesis via DAP pathway; (S)-tetrahydrodipicolinate from L-aspartate: step 2/4. It functions in the pathway amino-acid biosynthesis; L-methionine biosynthesis via de novo pathway; L-homoserine from L-aspartate: step 2/3. The protein operates within amino-acid biosynthesis; L-threonine biosynthesis; L-threonine from L-aspartate: step 2/5. Functionally, catalyzes the NADPH-dependent formation of L-aspartate-semialdehyde (L-ASA) by the reductive dephosphorylation of L-aspartyl-4-phosphate. The protein is Aspartate-semialdehyde dehydrogenase of Campylobacter jejuni subsp. jejuni serotype O:2 (strain ATCC 700819 / NCTC 11168).